We begin with the raw amino-acid sequence, 273 residues long: Protein INAPERTURATE POLLEN1 (273 aa).

In terms of domain architecture, DOG1 spans 12–267; that stretch reads SRRFNDFYED…KDQILLQDFE (256 aa).

Expressed only in anthers and in pollen. Not detected in other flower tissues, stems, leaves and siliques.

The protein localises to the cytoplasm. Functionally, required for the formation of pollen surface apertures, which arise by restriction of exine deposition at specific sites. The aperture length depends on the INP1 dosage. Does not play a role in specifying the number or position of apertures. Acts in a sporophytic manner. This is Protein INAPERTURATE POLLEN1 from Arabidopsis thaliana (Mouse-ear cress).